The following is a 642-amino-acid chain: Transcription factor 4 (642 aa).

Polar residues predominate over residues Met-1–Asn-25. The interval Met-1–Arg-59 is essential for MYOD1 inhibition. Disordered regions lie at residues Met-1–Gly-296, His-311–Leu-354, Pro-444–Asn-545, and Lys-609–Met-642. Residues Ser-42, Ser-63, and Ser-68 each carry the phosphoserine modification. Composition is skewed to polar residues over residues Gly-83 to His-98, Gly-112 to Asn-130, Pro-181 to Phe-191, Gly-218 to Cys-230, and Pro-241 to Ile-281. Residues Thr-312–Pro-323 are compositionally biased toward low complexity. Polar residues predominate over residues Asn-340–Asn-349. Ser-347 is modified (phosphoserine). The interval Leu-354–Leu-375 is leucine-zipper. 2 stretches are compositionally biased toward low complexity: residues Pro-444–Gln-455 and Gly-478–Glu-487. Ser-490 is subject to Phosphoserine. 2 stretches are compositionally biased toward basic and acidic residues: residues Lys-502 to Lys-517 and Pro-530 to Asn-545. The 54-residue stretch at Glu-539–Leu-592 folds into the bHLH domain. Residues Gln-594–Ser-617 form a class A specific domain region.

In terms of assembly, efficient DNA binding requires dimerization with another bHLH protein. Forms homo- or heterooligomers with myogenin. Interacts with HIVEP2. Interacts with NEUROD2. Interacts with AGBL1. Widely expressed.

Its subcellular location is the nucleus. Transcription factor that binds to the immunoglobulin enhancer Mu-E5/KE5-motif. Involved in the initiation of neuronal differentiation. Activates transcription by binding to the E box (5'-CANNTG-3'). Binds to the thyroglobulin promoter. The polypeptide is Transcription factor 4 (TCF4) (Canis lupus familiaris (Dog)).